Consider the following 330-residue polypeptide: Probable cell division protein WhiA (330 aa).

A DNA-binding region (H-T-H motif) is located at residues 275 to 308 (SLDELGRLSDPPLTKDAIAGRIRRLLAMADRRAE).

This sequence belongs to the WhiA family.

Its function is as follows. Involved in cell division and chromosome segregation. This is Probable cell division protein WhiA from Kocuria rhizophila (strain ATCC 9341 / DSM 348 / NBRC 103217 / DC2201).